A 264-amino-acid chain; its full sequence is Octanoyltransferase (264 aa).

One can recognise a BPL/LPL catalytic domain in the interval 74 to 262 (GTASELVWLV…AFESVFGPRQ (189 aa)). Substrate is bound by residues 113–120 (RGGEYTYH), 193–195 (AIG), and 206–208 (GIA). Catalysis depends on cysteine 224, which acts as the Acyl-thioester intermediate.

It belongs to the LipB family.

It localises to the cytoplasm. It carries out the reaction octanoyl-[ACP] + L-lysyl-[protein] = N(6)-octanoyl-L-lysyl-[protein] + holo-[ACP] + H(+). It participates in protein modification; protein lipoylation via endogenous pathway; protein N(6)-(lipoyl)lysine from octanoyl-[acyl-carrier-protein]: step 1/2. In terms of biological role, catalyzes the transfer of endogenously produced octanoic acid from octanoyl-acyl-carrier-protein onto the lipoyl domains of lipoate-dependent enzymes. Lipoyl-ACP can also act as a substrate although octanoyl-ACP is likely to be the physiological substrate. This Brucella melitensis biotype 1 (strain ATCC 23456 / CCUG 17765 / NCTC 10094 / 16M) protein is Octanoyltransferase.